The following is a 725-amino-acid chain: Peroxisomal fatty acid beta-oxidation multifunctional protein MFP2 (725 aa).

Catalysis depends on glutamate 119, which acts as the Nucleophile. The active-site Proton acceptor is glutamate 139. The short motif at 723 to 725 (SRL) is the Microbody targeting signal element.

It in the N-terminal section; belongs to the enoyl-CoA hydratase/isomerase family. The protein in the central section; belongs to the 3-hydroxyacyl-CoA dehydrogenase family. Highly expressed in senescing leaves and at lower levels in flowers and siliques.

The protein resides in the glyoxysome. The protein localises to the peroxisome. The catalysed reaction is a (3S)-3-hydroxyacyl-CoA = a (2E)-enoyl-CoA + H2O. The enzyme catalyses a 4-saturated-(3S)-3-hydroxyacyl-CoA = a (3E)-enoyl-CoA + H2O. It carries out the reaction (3S)-3-hydroxybutanoyl-CoA = (2E)-butenoyl-CoA + H2O. It catalyses the reaction (3S)-hydroxyoctanoyl-CoA = (2E)-octenoyl-CoA + H2O. The catalysed reaction is (3S)-3-hydroxydodecanoyl-CoA = (2E)-dodecenoyl-CoA + H2O. The enzyme catalyses (3S)-hydroxytetradecanoyl-CoA = (2E)-tetradecenoyl-CoA + H2O. It carries out the reaction (3S)-hydroxyhexanoyl-CoA = (2E)-hexenoyl-CoA + H2O. It catalyses the reaction a (3Z)-enoyl-CoA = a 4-saturated (2E)-enoyl-CoA. The catalysed reaction is a (3E)-enoyl-CoA = a 4-saturated (2E)-enoyl-CoA. The enzyme catalyses (3S)-3-hydroxybutanoyl-CoA = (3R)-3-hydroxybutanoyl-CoA. It carries out the reaction a (3S)-3-hydroxyacyl-CoA + NAD(+) = a 3-oxoacyl-CoA + NADH + H(+). It catalyses the reaction (3S)-3-hydroxybutanoyl-CoA + NAD(+) = acetoacetyl-CoA + NADH + H(+). The catalysed reaction is (3S)-hydroxyhexanoyl-CoA + NAD(+) = 3-oxohexanoyl-CoA + NADH + H(+). The enzyme catalyses (3S)-hydroxyoctanoyl-CoA + NAD(+) = 3-oxooctanoyl-CoA + NADH + H(+). It carries out the reaction (3S)-3-hydroxydodecanoyl-CoA + NAD(+) = 3-oxododecanoyl-CoA + NADH + H(+). It catalyses the reaction (3S)-hydroxytetradecanoyl-CoA + NAD(+) = 3-oxotetradecanoyl-CoA + NADH + H(+). It functions in the pathway lipid metabolism; fatty acid beta-oxidation. In terms of biological role, involved in peroxisomal fatty acid beta-oxidation during seed germination. Possesses enoyl-CoA hydratase activity against long chain substrates (C14-C18) and 3-hydroxyacyl-CoA dehydrogenase activity against chains of variable sizes (C6-C18). Possesses 3-hydroxy-3-phenylpropionyl-CoA dehydrogenase activity and is involved in the peroxisomal beta-oxidation pathway for the biosynthesis of benzoic acid (BA). Required for the accumulation in seeds of substituted hydroxybenzoylated choline esters, which are BA-containing secondary metabolites. Fatty acid beta-oxidation pathway in peroxisomes regulates gene silencing, histone acetylation and DNA methylation. In Arabidopsis thaliana (Mouse-ear cress), this protein is Peroxisomal fatty acid beta-oxidation multifunctional protein MFP2.